The primary structure comprises 923 residues: MRFEFESDASSHLNEVLTELESVELENVEYEGPSLQNVSICASPSEKKRKWGTQDEFSLTENEENNEIETNEEMHVNSHDYAFPQEFFLKLLDIDMPLEQLSQHYFEDYKSNSADFMLTFINFALVASGCQPFVTNFDVQDVDSIPETLSQVNRSSFQKSSCAYTDYLYTSNSKEAKTVRIRFQLFLVEFISKVYVEDAFLGDSFMETTKAWIFTMTTSPWMLVRHTATTICCDIMRCLCLIVNKLSEKSNQTAEILVLRDLTSRFIDMIHDICDSVLFSRIHDIRASIRIVCVTALYDCCQLLPTYLINRNLIRHSGWGLSDAESQIRKISLKIIDYLSSHEPEKDQDFVVDFLDRFSLRIVEICRYDIDSVRSVALKTCEKLMEKISLNGKCINIVSSCIFDGKPQNRISTMRILVAHTNERYANYCEAKTATISLSKLLRREKIPLLVSSFESLFKMNALLFILEQGFESWFRDSSDHIFSRVKDDDKFVYQSQENNFYDADFIREYDMNNHRQQLIEESMHSIHTNSQLLASWEDVAKLLLYDRFDAKDTNSVLNPCIPSNAVIEFSSIYLHYFATHISKRSKKPGKRLEDEVVNQQQAMLRNLPLLLQKYRESCVSSYFFIKCVEQIPDELLYKREFHKDFSKLYKEILDIFNSTTVNFLMILCSRFFHRLAVNKVVQEDILFAIDNVYNDLAESLHEQLNAYIQRKKINKKNQLNGNDETQNLVLALNKFGCFAKEMVCLRDVNDWNIKLSEKLCEICSLEVGPIVCYSSLKVLFLLLLSDMRDRNCIFTNIFLKAAKVAKQKNGNSFLSKVFITITMLTLFLGSKANNWDINFSDDDLKLMNEEEIMEQIETFKAWSMKFKEKSSGNPSYFFSPEDTEEKELWNNLFEDWYPNRARDPGTLSHLVKGLKETADHLS.

In terms of domain architecture, SCD spans 278–365 (LFSRIHDIRA…DRFSLRIVEI (88 aa)).

The protein is Meiotic recombination protein rec11 (rec11) of Schizosaccharomyces pombe (strain 972 / ATCC 24843) (Fission yeast).